The sequence spans 422 residues: L-2-hydroxyglutarate dehydrogenase (422 aa).

Belongs to the L2HGDH family. The cofactor is FAD.

It is found in the cell inner membrane. It carries out the reaction (S)-2-hydroxyglutarate + a quinone = a quinol + 2-oxoglutarate. It functions in the pathway amino-acid degradation. Functionally, catalyzes the dehydrogenation of L-2-hydroxyglutarate (L2HG) to alpha-ketoglutarate and couples to the respiratory chain by feeding electrons from the reaction into the membrane quinone pool. Functions in a L-lysine degradation pathway that proceeds via cadaverine, glutarate and L-2-hydroxyglutarate. This is L-2-hydroxyglutarate dehydrogenase from Escherichia coli (strain K12).